The chain runs to 475 residues: Solute carrier family 46 member 2 (475 aa).

Topologically, residues 1–23 are cytoplasmic; the sequence is MSPEVTCPRRGHLPRFHPRTWVE. Residues 24–44 traverse the membrane as a helical segment; the sequence is PVVASSQVAASLYDAGLLLVV. At 45-78 the chain is on the extracellular side; that stretch reads KASYGTGGSSNHSASPSPRGALEDQQQRAISNFY. N-linked (GlcNAc...) asparagine glycosylation is present at N55. The helical transmembrane segment at 79 to 99 threads the bilayer; the sequence is IIYNLVVGLSPLLSAYGLGWL. The Cytoplasmic portion of the chain corresponds to 100 to 108; sequence SDRYHRKIS. Residues 109–129 form a helical membrane-spanning segment; it reads ICMSLLGFLLSRLGLLLKVLL. At 130-138 the chain is on the extracellular side; that stretch reads DWPVEVLYG. The helical transmembrane segment at 139 to 159 threads the bilayer; sequence AAALNGLFGGFSAFWSGVMAL. Topologically, residues 160-172 are cytoplasmic; it reads GSLGSSEGRRSVR. The helical transmembrane segment at 173–193 threads the bilayer; the sequence is LILIDLMLGLAGFCGSMASGH. Residues 194–205 are Extracellular-facing; sequence LFKQMAGHSGQG. Residues 206 to 226 traverse the membrane as a helical segment; the sequence is LILTACSVSCASFALLYSLLV. Topologically, residues 227 to 282 are cytoplasmic; sequence LKVPESVAKPSQELPAVDTVSGTVGTYRTLDPDQLDQQYAVGHPPSPGKAKPHKTT. Residues 283–303 form a helical membrane-spanning segment; that stretch reads IALLFVGAIIYDLAVVGTVDV. Over 304 to 320 the chain is Extracellular; the sequence is IPLFVLREPLGWNQVQV. The helical transmembrane segment at 321–341 threads the bilayer; sequence GYGMAAGYTIFITSFLGVLVF. Residues 342 to 347 are Cytoplasmic-facing; the sequence is SRCFRD. The helical transmembrane segment at 348–368 threads the bilayer; the sequence is TTMIMIGMVSFGSGALLLAFV. Residues 369 to 370 lie on the Extracellular side of the membrane; the sequence is KE. Residues 371-391 form a helical membrane-spanning segment; it reads TYMFYIARAVMLFALIPVTTI. Over 392 to 406 the chain is Cytoplasmic; it reads RSAMSKLIKGSSYGK. A helical membrane pass occupies residues 407–427; sequence VFVILQLSLALTGVVTSTLYN. Residues 428 to 435 are Extracellular-facing; that stretch reads KIYQLTMD. The chain crosses the membrane as a helical span at residues 436-456; that stretch reads MFVGSCFALSSFLSFLAIIPI. Topologically, residues 457-475 are cytoplasmic; sequence SIVAYKQVPLSPYGDIIEK.

Belongs to the major facilitator superfamily. SLC46A family. Post-translationally, glycosylated. Strongly expressed in the adult thymus. Expressed in spleen, lymph nodes, thymus, PBL, bone marrow and fetal liver. Expressed in monocytes and pre-dendridic cells.

Its subcellular location is the endosome membrane. It localises to the cell membrane. It catalyses the reaction N-acetyl-beta-D-glucosaminyl-(1-&gt;4)-1,6-anhydro-N-acetyl-beta-D-muramoyl-L-alanyl-gamma-D-glutamyl-meso-2,6-diaminopimeloyl-D-alanine(out) + n H(+)(out) = N-acetyl-beta-D-glucosaminyl-(1-&gt;4)-1,6-anhydro-N-acetyl-beta-D-muramoyl-L-alanyl-gamma-D-glutamyl-meso-2,6-diaminopimeloyl-D-alanine(in) + n H(+)(in). It carries out the reaction L-alanyl-gamma-D-glutamyl-meso-2,6-diaminopimelate(out) + n H(+)(out) = L-alanyl-gamma-D-glutamyl-meso-2,6-diaminopimelate(in) + n H(+)(in). The enzyme catalyses N-acetyl-D-muramoyl-L-alanyl-D-isoglutamine(out) + n H(+)(out) = N-acetyl-D-muramoyl-L-alanyl-D-isoglutamine(in) + n H(+)(in). The catalysed reaction is 2',3'-cGAMP(out) + n H(+)(out) = 2',3'-cGAMP(in) + n H(+)(in). It catalyses the reaction 3',3'-cGAMP(out) + n H(+)(out) = 3',3'-cGAMP(in) + n H(+)(in). Functionally, proton-coupled transporter that delivers pathogen-associated or danger-associated molecular patterns to cytosolic pattern recognition receptors as part of the innate immune response to microbes or tissue injury. Has selectivity toward muropeptides that contain the amino acid diaminopimelic acid (DAP-type peptidoglycan muropeptides) including Tri-DAP and tracheal toxin (TCT), common in Gram-negative bacteria and Gram-positive bacilli. In the context of immune recognition of skin microbiota, shuttles bacterial muropeptides across the endolysosomal membranes into the cytosol for recognition by NOD1, triggering MYD88-dependent secretion of IL1A and neutrophil recruitment in a pyroptosis-type inflammatory process. To a lesser extent and redundantly, transports muramyl dipeptides derived from most bacterial proteoglycans, eliciting NOD2 receptor activation and downstream inflammatory responses. Postulated to function as a dominant importer of cyclic GMP-AMP dinucleotides (cGAMPs) in monocyte and macrophage cell lineages. Selectively imports cGAMPs derived from pathogenic bacteria such as 3'3'-cGAMP thus providing for differential immune recognition of pathogenic versus commensal bacteria. During tumorigenesis may transport extracellular tumor-derived 2'3'-cGAMP across the plasma membrane of M1-polarized macrophages to activate the anti-tumoral stimulator of interferon genes (STING) pathway. The transport mechanism, its electrogenicity and stoichiometry remain to be elucidated. The sequence is that of Solute carrier family 46 member 2 from Homo sapiens (Human).